Consider the following 302-residue polypeptide: RNA polymerase sigma factor RpoH (302 aa).

Positions 57–126 (LVTSHLRLVA…IQEYILRSWS (70 aa)) are sigma-70 factor domain-2. Positions 81–84 (ELIS) match the Interaction with polymerase core subunit RpoC motif. Residues 235 to 286 (AMDKLNDREKHILTERRLSDNPKTLEELSQVYGVSRERVRQIEVRAFDKLQK) are sigma-70 factor domain-4. Residues 259-278 (LEELSQVYGVSRERVRQIEV) constitute a DNA-binding region (H-T-H motif).

It belongs to the sigma-70 factor family. RpoH subfamily. Interacts with the RNA polymerase core enzyme.

It is found in the cytoplasm. Sigma factors are initiation factors that promote the attachment of RNA polymerase to specific initiation sites and are then released. This sigma factor is involved in regulation of expression of heat shock genes. The sequence is that of RNA polymerase sigma factor RpoH from Zymomonas mobilis subsp. mobilis (strain ATCC 31821 / ZM4 / CP4).